The chain runs to 2512 residues: Fatty acid synthase (2512 aa).

The residue at position 2 (Glu-2) is an N-acetylglutamate. The Ketosynthase family 3 (KS3) domain maps to 2-406 (EDVVIAGIAG…GSNAHVILRP (405 aa)). Catalysis depends on for beta-ketoacyl synthase activity residues Cys-161, His-293, and His-331. An acyl and malonyl transferases region spans residues 427-815 (GRTQEAVEIL…GINVLGNNLF (389 aa)). The active-site For acyl/malonyl transferase activity is the Ser-580. An acyl-CoA contacts are provided by residues 646 to 647 (DT), Phe-670, and Arg-772. The N-terminal hotdog fold stretch occupies residues 844–967 (PKAEDFPSGS…ISLLENDALK (124 aa)). The region spanning 844–1111 (PKAEDFPSGS…ASVAPRRQQE (268 aa)) is the PKS/mFAS DH domain. His-878 functions as the Proton acceptor; for dehydratase activity in the catalytic mechanism. The segment at 984-1111 (AKSGLLMEDV…ASVAPRRQQE (128 aa)) is C-terminal hotdog fold. Asp-1034 acts as the Proton donor; for dehydratase activity in catalysis. At Cys-1475 the chain carries S-nitrosocysteine. The enoyl reductase stretch occupies residues 1638–1866 (WEVPENWTLE…MIKIQEEEKQ (229 aa)). NADP(+) is bound at residue 1675 to 1692 (VLIHSGSGGVGQAAIAIA). Lys-1708 carries the N6-(pyridoxal phosphate)lysine modification. Positions 1867 to 2119 (YPLRSEPVKL…SFVLAEKVSV (253 aa)) are beta-ketoacyl reductase. Position 1889-1904 (1889-1904 (SYIITGGLGGFGLELA)) interacts with NADP(+). The residue at position 2093 (Cys-2093) is an S-nitrosocysteine. The region spanning 2120 to 2200 (KSEGGSQRDL…ELSSKTGTAE (81 aa)) is the Carrier domain. Ser-2158 carries the post-translational modification O-(pantetheine 4'-phosphoryl)serine. The interval 2209–2511 (KTGPGEPPKL…LAEPRVSVRE (303 aa)) is thioesterase. Catalysis depends on for thioesterase activity residues Ser-2309 and His-2482.

Homodimer which is arranged in a head to tail fashion. Post-translationally, S-nitrosylation of Fatty acid synthase at cysteine residues Cys-1475 or Cys-2093 is important for the enzyme dimerization. In adipocytes, S-nitrosylation of Fatty acid synthase occurs under physiological conditions and gradually increases during adipogenesis.

It catalyses the reaction acetyl-CoA + n malonyl-CoA + 2n NADPH + 2n H(+) = a long-chain fatty acid + (n+1) CoA + n CO2 + 2n NADP(+).. It carries out the reaction holo-[ACP] + acetyl-CoA = acetyl-[ACP] + CoA. The enzyme catalyses holo-[ACP] + malonyl-CoA = malonyl-[ACP] + CoA. The catalysed reaction is a fatty acyl-[ACP] + malonyl-[ACP] + H(+) = a 3-oxoacyl-[ACP] + holo-[ACP] + CO2. It catalyses the reaction a (3R)-hydroxyacyl-[ACP] + NADP(+) = a 3-oxoacyl-[ACP] + NADPH + H(+). It carries out the reaction a (3R)-hydroxyacyl-[ACP] = a (2E)-enoyl-[ACP] + H2O. The enzyme catalyses a 2,3-saturated acyl-[ACP] + NADP(+) = a (2E)-enoyl-[ACP] + NADPH + H(+). The catalysed reaction is hexadecanoyl-[ACP] + H2O = hexadecanoate + holo-[ACP] + H(+). It catalyses the reaction acetyl-[ACP] + malonyl-[ACP] + H(+) = 3-oxobutanoyl-[ACP] + holo-[ACP] + CO2. It carries out the reaction 3-oxobutanoyl-[ACP] + NADPH + H(+) = (3R)-hydroxybutanoyl-[ACP] + NADP(+). The enzyme catalyses (3R)-hydroxybutanoyl-[ACP] = (2E)-butenoyl-[ACP] + H2O. The catalysed reaction is (2E)-butenoyl-[ACP] + NADPH + H(+) = butanoyl-[ACP] + NADP(+). It catalyses the reaction butanoyl-[ACP] + malonyl-[ACP] + H(+) = 3-oxohexanoyl-[ACP] + holo-[ACP] + CO2. It carries out the reaction 3-oxohexanoyl-[ACP] + NADPH + H(+) = (3R)-hydroxyhexanoyl-[ACP] + NADP(+). The enzyme catalyses (3R)-hydroxyhexanoyl-[ACP] = (2E)-hexenoyl-[ACP] + H2O. The catalysed reaction is (2E)-hexenoyl-[ACP] + NADPH + H(+) = hexanoyl-[ACP] + NADP(+). It catalyses the reaction hexanoyl-[ACP] + malonyl-[ACP] + H(+) = 3-oxooctanoyl-[ACP] + holo-[ACP] + CO2. It carries out the reaction 3-oxooctanoyl-[ACP] + NADPH + H(+) = (3R)-hydroxyoctanoyl-[ACP] + NADP(+). The enzyme catalyses (3R)-hydroxyoctanoyl-[ACP] = (2E)-octenoyl-[ACP] + H2O. The catalysed reaction is (2E)-octenoyl-[ACP] + NADPH + H(+) = octanoyl-[ACP] + NADP(+). It catalyses the reaction octanoyl-[ACP] + malonyl-[ACP] + H(+) = 3-oxodecanoyl-[ACP] + holo-[ACP] + CO2. It carries out the reaction 3-oxodecanoyl-[ACP] + NADPH + H(+) = (3R)-hydroxydecanoyl-[ACP] + NADP(+). The enzyme catalyses (3R)-hydroxydecanoyl-[ACP] = (2E)-decenoyl-[ACP] + H2O. The catalysed reaction is (2E)-decenoyl-[ACP] + NADPH + H(+) = decanoyl-[ACP] + NADP(+). It catalyses the reaction decanoyl-[ACP] + malonyl-[ACP] + H(+) = 3-oxododecanoyl-[ACP] + holo-[ACP] + CO2. It carries out the reaction 3-oxododecanoyl-[ACP] + NADPH + H(+) = (3R)-hydroxydodecanoyl-[ACP] + NADP(+). The enzyme catalyses (3R)-hydroxydodecanoyl-[ACP] = (2E)-dodecenoyl-[ACP] + H2O. The catalysed reaction is (2E)-dodecenoyl-[ACP] + NADPH + H(+) = dodecanoyl-[ACP] + NADP(+). It catalyses the reaction dodecanoyl-[ACP] + malonyl-[ACP] + H(+) = 3-oxotetradecanoyl-[ACP] + holo-[ACP] + CO2. It carries out the reaction 3-oxotetradecanoyl-[ACP] + NADPH + H(+) = (3R)-hydroxytetradecanoyl-[ACP] + NADP(+). The enzyme catalyses (3R)-hydroxytetradecanoyl-[ACP] = (2E)-tetradecenoyl-[ACP] + H2O. The catalysed reaction is (2E)-tetradecenoyl-[ACP] + NADPH + H(+) = tetradecanoyl-[ACP] + NADP(+). It catalyses the reaction tetradecanoyl-[ACP] + malonyl-[ACP] + H(+) = 3-oxohexadecanoyl-[ACP] + holo-[ACP] + CO2. It carries out the reaction 3-oxohexadecanoyl-[ACP] + NADPH + H(+) = (3R)-hydroxyhexadecanoyl-[ACP] + NADP(+). The enzyme catalyses (3R)-hydroxyhexadecanoyl-[ACP] = (2E)-hexadecenoyl-[ACP] + H2O. The catalysed reaction is (2E)-hexadecenoyl-[ACP] + NADPH + H(+) = hexadecanoyl-[ACP] + NADP(+). It catalyses the reaction hexadecanoyl-[ACP] + malonyl-[ACP] + H(+) = 3-oxooctadecanoyl-[ACP] + holo-[ACP] + CO2. It carries out the reaction 3-oxooctadecanoyl-[ACP] + NADPH + H(+) = (3R)-hydroxyoctadecanoyl-[ACP] + NADP(+). The enzyme catalyses (3R)-hydroxyoctadecanoyl-[ACP] = (2E)-octadecenoyl-[ACP] + H2O. The catalysed reaction is (2E)-octadecenoyl-[ACP] + NADPH + H(+) = octadecanoyl-[ACP] + NADP(+). It catalyses the reaction tetradecanoyl-[ACP] + H2O = tetradecanoate + holo-[ACP] + H(+). It carries out the reaction octadecanoyl-[ACP] + H2O = octadecanoate + holo-[ACP] + H(+). Its pathway is lipid metabolism; fatty acid biosynthesis. Cerulenin, a potent non-competitive pharmacological inhibitor of FAS, binds covalently to the active site of the condensing enzyme region, inactivating a key enzyme step in fatty acid synthesis. Fatty acid synthetase is a multifunctional enzyme that catalyzes the de novo biosynthesis of long-chain saturated fatty acids starting from acetyl-CoA and malonyl-CoA in the presence of NADPH. This multifunctional protein contains 7 catalytic activities and a site for the binding of the prosthetic group 4'-phosphopantetheine of the acyl carrier protein ([ACP]) domain. The polypeptide is Fatty acid synthase (FASN) (Gallus gallus (Chicken)).